A 221-amino-acid chain; its full sequence is Large ribosomal subunit protein uL4 (221 aa).

The segment at T48–S77 is disordered.

The protein belongs to the universal ribosomal protein uL4 family. In terms of assembly, part of the 50S ribosomal subunit.

Functionally, one of the primary rRNA binding proteins, this protein initially binds near the 5'-end of the 23S rRNA. It is important during the early stages of 50S assembly. It makes multiple contacts with different domains of the 23S rRNA in the assembled 50S subunit and ribosome. Forms part of the polypeptide exit tunnel. The polypeptide is Large ribosomal subunit protein uL4 (Thermosipho africanus (strain TCF52B)).